Consider the following 95-residue polypeptide: Small ribosomal subunit protein bS18 (95 aa).

It belongs to the bacterial ribosomal protein bS18 family. As to quaternary structure, part of the 30S ribosomal subunit. Forms a tight heterodimer with protein bS6.

Binds as a heterodimer with protein bS6 to the central domain of the 16S rRNA, where it helps stabilize the platform of the 30S subunit. The sequence is that of Small ribosomal subunit protein bS18 from Rickettsia felis (strain ATCC VR-1525 / URRWXCal2) (Rickettsia azadi).